The primary structure comprises 471 residues: Putative multidrug resistance protein MdtD (471 aa).

Residues Met1–Arg11 lie on the Periplasmic side of the membrane. A helical transmembrane segment spans residues Leu12–Ala32. Residues Leu33 to His48 lie on the Cytoplasmic side of the membrane. Residues Met49–Ala69 form a helical membrane-spanning segment. Topologically, residues Asp70 to Asn76 are periplasmic. The chain crosses the membrane as a helical span at residues Ile77 to Thr97. The Cytoplasmic portion of the chain corresponds to Leu98–Leu101. Residues Leu102–Met124 form a helical membrane-spanning segment. Residues Lys125–Thr137 lie on the Periplasmic side of the membrane. The chain crosses the membrane as a helical span at residues Phe138–Val158. The Cytoplasmic portion of the chain corresponds to Glu159–His164. A helical membrane pass occupies residues Trp165–Met185. Residues Pro186–Asp196 are Periplasmic-facing. Residues Leu197–Ser217 form a helical membrane-spanning segment. Residues Lys218–Pro224 are Cytoplasmic-facing. The chain crosses the membrane as a helical span at residues Leu225–Ala245. At Gln246–Thr262 the chain is on the periplasmic side. A helical transmembrane segment spans residues Phe263 to Met283. The Cytoplasmic segment spans residues Thr284–Pro285. The chain crosses the membrane as a helical span at residues Val286–Met306. Topologically, residues Val307–Thr341 are periplasmic. Residues Leu342–Leu362 form a helical membrane-spanning segment. The Cytoplasmic portion of the chain corresponds to Gln363–Ser395. The chain crosses the membrane as a helical span at residues Met396–Phe416. Over Gly417 to Thr430 the chain is Periplasmic. Residues Val431–Ala451 form a helical membrane-spanning segment. Residues Arg452–Gln471 lie on the Cytoplasmic side of the membrane.

The protein belongs to the major facilitator superfamily. TCR/Tet family.

It is found in the cell inner membrane. The chain is Putative multidrug resistance protein MdtD from Escherichia coli O6:K15:H31 (strain 536 / UPEC).